Consider the following 323-residue polypeptide: Aldo-keto reductase family 1 member C3 (323 aa).

NADP(+) contacts are provided by residues 23-24 and Asp50; that span reads TY. Catalysis depends on Tyr55, which acts as the Proton donor. His117 provides a ligand contact to substrate. NADP(+)-binding positions include 166–167, Gln190, 216–222, 270–272, and 276–280; these read SN, YSALGSQ, KSY, and RIRQN.

The protein belongs to the aldo/keto reductase family. In terms of tissue distribution, expressed in many tissues including adrenal gland, brain, kidney, liver, lung, mammary gland, placenta, small intestine, colon, spleen, prostate and testis. High expression in prostate and mammary gland. In the prostate, higher levels in epithelial cells than in stromal cells. In the brain, expressed in medulla, spinal cord, frontotemporal lobes, thalamus, subthalamic nuclei and amygdala. Weaker expression in the hippocampus, substantia nigra and caudate.

Its subcellular location is the cytoplasm. The enzyme catalyses a 3alpha-hydroxysteroid + NADP(+) = a 3-oxosteroid + NADPH + H(+). It catalyses the reaction a 3alpha-hydroxysteroid + NAD(+) = a 3-oxosteroid + NADH + H(+). It carries out the reaction prostaglandin F2alpha + NADP(+) = prostaglandin D2 + NADPH + H(+). The catalysed reaction is prostaglandin F2alpha + NADP(+) = prostaglandin H2 + NADPH + H(+). The enzyme catalyses prostaglandin D2 + NADPH + H(+) = 11beta-prostaglandin F2 + NADP(+). It catalyses the reaction prostaglandin D2-ethanolamide + NADPH + H(+) = 11beta-prostaglandin F2-ethanolamide + NADP(+). It carries out the reaction testosterone + NAD(+) = androst-4-ene-3,17-dione + NADH + H(+). The catalysed reaction is testosterone + NADP(+) = androst-4-ene-3,17-dione + NADPH + H(+). The enzyme catalyses 17beta-estradiol + NADP(+) = estrone + NADPH + H(+). It catalyses the reaction 17beta-estradiol + NAD(+) = estrone + NADH + H(+). It carries out the reaction (20S)-hydroxypregn-4-en-3-one + NADP(+) = progesterone + NADPH + H(+). The catalysed reaction is (20S)-hydroxypregn-4-en-3-one + NAD(+) = progesterone + NADH + H(+). The enzyme catalyses 5alpha-androstane-3alpha,17beta-diol + NADP(+) = 17beta-hydroxy-5alpha-androstan-3-one + NADPH + H(+). It catalyses the reaction 5alpha-androstane-3alpha,17beta-diol + NAD(+) = 17beta-hydroxy-5alpha-androstan-3-one + NADH + H(+). It carries out the reaction androsterone + NADPH + H(+) = 5alpha-androstane-3alpha,17beta-diol + NADP(+). The catalysed reaction is 5alpha-androstane-3alpha,17beta-diol + NAD(+) = androsterone + NADH + H(+). The enzyme catalyses 5alpha-androstane-3beta,17beta-diol + NADP(+) = 17beta-hydroxy-5alpha-androstan-3-one + NADPH + H(+). It catalyses the reaction 9-cis-retinol + NADP(+) = 9-cis-retinal + NADPH + H(+). The protein operates within steroid metabolism. Strongly inhibited by nonsteroidal anti-inflammatory drugs (NSAID) including flufenamic acid and indomethacin. Also inhibited by the flavinoid, rutin, and by selective serotonin inhibitors (SSRIs). The oxidation reaction is inhibited by low micromolar concentrations of NADPH. Functionally, cytosolic aldo-keto reductase that catalyzes the NADH and NADPH-dependent reduction of ketosteroids to hydroxysteroids. Acts as a NAD(P)(H)-dependent 3-, 17- and 20-ketosteroid reductase on the steroid nucleus and side chain and regulates the metabolism of androgens, estrogens and progesterone. Displays the ability to catalyze both oxidation and reduction in vitro, but most probably acts as a reductase in vivo since the oxidase activity measured in vitro is inhibited by physiological concentration of NADPH. Acts preferentially as a 17-ketosteroid reductase and has the highest catalytic efficiency of the AKR1C enzyme for the reduction of delta4-androstenedione to form testosterone. Reduces prostaglandin (PG) D2 to 11beta-prostaglandin F2, progesterone to 20alpha-hydroxyprogesterone and estrone to 17beta-estradiol. Catalyzes the transformation of the potent androgen dihydrotestosterone (DHT) into the less active form, 5-alpha-androstan-3-alpha,17-beta-diol (3-alpha-diol). Also displays retinaldehyde reductase activity toward 9-cis-retinal. This Homo sapiens (Human) protein is Aldo-keto reductase family 1 member C3 (AKR1C3).